A 319-amino-acid chain; its full sequence is Ribosomal RNA small subunit methyltransferase H (319 aa).

S-adenosyl-L-methionine contacts are provided by residues 39–41, Asp59, Phe83, Asp104, and Gln111; that span reads GGH.

This sequence belongs to the methyltransferase superfamily. RsmH family.

Its subcellular location is the cytoplasm. It catalyses the reaction cytidine(1402) in 16S rRNA + S-adenosyl-L-methionine = N(4)-methylcytidine(1402) in 16S rRNA + S-adenosyl-L-homocysteine + H(+). In terms of biological role, specifically methylates the N4 position of cytidine in position 1402 (C1402) of 16S rRNA. This is Ribosomal RNA small subunit methyltransferase H from Ralstonia pickettii (strain 12J).